A 641-amino-acid chain; its full sequence is 1-deoxy-D-xylulose-5-phosphate synthase (641 aa).

Residues His80 and 121–123 (GHS) contribute to the thiamine diphosphate site. Asp152 is a Mg(2+) binding site. Residues 153–154 (GS), Asn181, Tyr290, and Glu372 each bind thiamine diphosphate. Mg(2+) is bound at residue Asn181.

This sequence belongs to the transketolase family. DXPS subfamily. As to quaternary structure, homodimer. Mg(2+) is required as a cofactor. Requires thiamine diphosphate as cofactor.

The enzyme catalyses D-glyceraldehyde 3-phosphate + pyruvate + H(+) = 1-deoxy-D-xylulose 5-phosphate + CO2. It participates in metabolic intermediate biosynthesis; 1-deoxy-D-xylulose 5-phosphate biosynthesis; 1-deoxy-D-xylulose 5-phosphate from D-glyceraldehyde 3-phosphate and pyruvate: step 1/1. Catalyzes the acyloin condensation reaction between C atoms 2 and 3 of pyruvate and glyceraldehyde 3-phosphate to yield 1-deoxy-D-xylulose-5-phosphate (DXP). The chain is 1-deoxy-D-xylulose-5-phosphate synthase from Rhodobacter capsulatus (Rhodopseudomonas capsulata).